A 264-amino-acid chain; its full sequence is NAD kinase (264 aa).

The active-site Proton acceptor is Asp45. Residues 45-46 (DG), 121-122 (NE), Arg147, Asp149, Ala184, and Gln221 contribute to the NAD(+) site.

The protein belongs to the NAD kinase family. The cofactor is a divalent metal cation.

It localises to the cytoplasm. The enzyme catalyses NAD(+) + ATP = ADP + NADP(+) + H(+). Functionally, involved in the regulation of the intracellular balance of NAD and NADP, and is a key enzyme in the biosynthesis of NADP. Catalyzes specifically the phosphorylation on 2'-hydroxyl of the adenosine moiety of NAD to yield NADP. The polypeptide is NAD kinase (Leuconostoc mesenteroides subsp. mesenteroides (strain ATCC 8293 / DSM 20343 / BCRC 11652 / CCM 1803 / JCM 6124 / NCDO 523 / NBRC 100496 / NCIMB 8023 / NCTC 12954 / NRRL B-1118 / 37Y)).